Consider the following 255-residue polypeptide: Putative OPA3-like protein CG13603 (255 aa).

Positions K108 to R154 form a coiled coil. The disordered stretch occupies residues V168 to F187. The stretch at D212–T241 forms a coiled coil.

It belongs to the OPA3 family.

In Drosophila melanogaster (Fruit fly), this protein is Putative OPA3-like protein CG13603.